A 156-amino-acid chain; its full sequence is ATP synthase subunit b (156 aa).

The chain crosses the membrane as a helical span at residues Leu-7–Pro-27.

This sequence belongs to the ATPase B chain family. In terms of assembly, F-type ATPases have 2 components, F(1) - the catalytic core - and F(0) - the membrane proton channel. F(1) has five subunits: alpha(3), beta(3), gamma(1), delta(1), epsilon(1). F(0) has three main subunits: a(1), b(2) and c(10-14). The alpha and beta chains form an alternating ring which encloses part of the gamma chain. F(1) is attached to F(0) by a central stalk formed by the gamma and epsilon chains, while a peripheral stalk is formed by the delta and b chains.

Its subcellular location is the cell inner membrane. In terms of biological role, f(1)F(0) ATP synthase produces ATP from ADP in the presence of a proton or sodium gradient. F-type ATPases consist of two structural domains, F(1) containing the extramembraneous catalytic core and F(0) containing the membrane proton channel, linked together by a central stalk and a peripheral stalk. During catalysis, ATP synthesis in the catalytic domain of F(1) is coupled via a rotary mechanism of the central stalk subunits to proton translocation. Functionally, component of the F(0) channel, it forms part of the peripheral stalk, linking F(1) to F(0). The polypeptide is ATP synthase subunit b (Coxiella burnetii (strain CbuK_Q154) (Coxiella burnetii (strain Q154))).